Consider the following 481-residue polypeptide: MIEVLLVTICLAVFPYQGSSIILESGNVNDYEVVYPRKVSALPKGAVQPKYEDAMQYEFKVNGEAVVLHLEKNKGLFSEDYSETHYSPDGREITTYPSVEDHCYYHGRIHNDADSTASISACDGLKGYFKLQGETYPIEPLELSDSEAHAVFKYENVEKEDEAPKMCGVTQNWESDESIKKASQLYLTPEQQRFPQRYIKLAIVVDHGMYTKYSSNFKKIRKRVHQMVSNINEMCRPLNIAITLALLDVWSEKDFITVQADAPTTAGLFGDWRERVLLKKKNHDHAQLLTDTNFARNTIGWAYVGRMCDEKYSVAVVKDHSSKVFMVAVTMTHELGHNLGMEHDDKDKCKCDTCIMSAVISDKQSKLFSDCSKDYYQTFLTNDNPQCILNAPLRTDTVSTPVSGNEFLEAGEECDCGSPENPCCDAATCKLRPGAQCAEGLCCDQCRFKKKRTICRRARGDNPDDRCTGQSADCPRNGLYG.

The first 20 residues, 1-20 (MIEVLLVTICLAVFPYQGSS), serve as a signal peptide directing secretion. Positions 21 to 189 (IILESGNVND…KKASQLYLTP (169 aa)) are excised as a propeptide. Glu190 carries the post-translational modification Pyrrolidone carboxylic acid (Glu). The region spanning 197–392 (RYIKLAIVVD…DNPQCILNAP (196 aa)) is the Peptidase M12B domain. 296–299 (RNTI) contributes to the an L-amino acid tripeptide binding site. Intrachain disulfides connect Cys308–Cys387, Cys349–Cys371, and Cys351–Cys354. Position 333 (His333) interacts with Zn(2+). Glu334 is an active-site residue. Residues His337 and His343 each contribute to the Zn(2+) site. Residue Ser357 coordinates an L-amino acid tripeptide. The propeptide occupies 393 to 410 (LRTDTVSTPVSGNEFLEA). Residues 400–481 (TPVSGNEFLE…ADCPRNGLYG (82 aa)) form the Disintegrin domain. Intrachain disulfides connect Cys414-Cys429, Cys416-Cys424, Cys423-Cys446, Cys437-Cys443, Cys442-Cys467, and Cys455-Cys474. The Cell attachment site signature appears at 459-461 (RGD).

Belongs to the venom metalloproteinase (M12B) family. P-II subfamily. P-IIa sub-subfamily. As to quaternary structure, monomer. Requires Zn(2+) as cofactor. Post-translationally, the N-terminus is blocked. Expressed by the venom gland.

It localises to the secreted. With respect to regulation, inhibited by EDTA and 1,10-phenanthroline. Is also inhibited by endogenous tripeptide inhibitors pyroGlu-Asn-Trp, pyroGlu-Gln-Trp, and pyroGlu-Lys-Trp. Functionally, potent fibrinogenolytic protease which cleaves mainly the Aalpha chain of fibrinogen (FGA) and slightly the Bbeta (FGB) and the gamma (FGG) chains. May possess hemorrhagic activity. Compared to other SVMP, the substrate-binding pocket is relatively shallow. Is less susceptible to tripeptide inhibitors than TM-1 (AC U3KRG1) and TM-2. In terms of biological role, inhibits platelet aggregation induced by ADP, thrombin, platelet-activating factor and collagen. Acts by inhibiting fibrinogen interaction with platelet receptors GPIIb/GPIIIa (ITGA2B/ITGB3). In Protobothrops mucrosquamatus (Taiwan habu), this protein is Zinc metalloproteinase/disintegrin.